The sequence spans 461 residues: Diacylglycerol O-acyltransferase 1 (461 aa).

The tract at residues 1 to 38 (MQDSMDDSLREAEGRQDDSEVSSGTTLGSSTPEDSGVT) is disordered. Topologically, residues 1-112 (MQDSMDDSLR…TLVVAWHTSS (112 aa)) are cytoplasmic. Over residues 7 to 18 (DSLREAEGRQDD) the composition is skewed to basic and acidic residues. Polar residues predominate over residues 21–33 (VSSGTTLGSSTPE). The helical transmembrane segment at 113–133 (FIYMTVLVLFLAANPLMWWFM) threads the bilayer. At 134 to 230 (VPYMVYYVWN…ARPQVATGPR (97 aa)) the chain is on the lumenal side. A helical membrane pass occupies residues 231 to 251 (YIFGYHPHGVGALGAFGAIAT). Residues 252–258 (EGCNWSK) lie on the Cytoplasmic side of the membrane. The helical transmembrane segment at 259–279 (VFAGIPACLCTLVNQFQIPIY) threads the bilayer. At 280–332 (RDYLLGLGCTSVARKNVLKVLEQNYSVCIVVGGAQEALLSRVGSTELVLNKRK) the chain is on the lumenal side. Residues 333–353 (GFIKLALETGNVNLVPIYAFG) traverse the membrane as a helical segment. Over 354-461 (ETDCFNVLDT…YAGKELKIVE (108 aa)) the chain is Cytoplasmic.

Belongs to the diacylglycerol acyltransferase family.

It is found in the lipid droplet. The protein localises to the endoplasmic reticulum membrane. It carries out the reaction an acyl-CoA + a 1,2-diacyl-sn-glycerol = a triacyl-sn-glycerol + CoA. The enzyme catalyses a 2-acylglycerol + an acyl-CoA = a 1,2-diacyl-sn-glycerol + CoA. It functions in the pathway glycerolipid metabolism; triacylglycerol biosynthesis. Catalyzes the terminal and only committed step in triacylglycerol (TAG) synthesis by using diacylglycerol (DAG) and fatty acyl-CoA as substrates. Required for storage lipid synthesis. Major DAG esterifying enzyme in stationary phase when TAG production is particularly active. Involved in lipid particle synthesis from the endoplasmic reticulum, promoting localized TAG production at discrete ER subdomains. The chain is Diacylglycerol O-acyltransferase 1 (DGA1) from Eremothecium gossypii (strain ATCC 10895 / CBS 109.51 / FGSC 9923 / NRRL Y-1056) (Yeast).